A 1048-amino-acid polypeptide reads, in one-letter code: Selenate reductase subunit A (1048 aa).

The segment at residues 1-39 (MENQHQKFISRRNFIKTSALLGGTAFLGTGLPNIKKTYS) is a signal peptide (tat-type signal). The 4Fe-4S Mo/W bis-MGD-type domain maps to 56 to 129 (ENILYSACLQ…AGIQHAYDPY (74 aa)). [4Fe-4S] cluster is bound by residues Cys63, Cys66, Cys70, and Cys115. Mo-bis(molybdopterin guanine dinucleotide) is bound at residue Cys270.

The protein belongs to the prokaryotic molybdopterin-containing oxidoreductase family. The complex is composed of three subunits: SrdA, SrdB and SrdC. It depends on [4Fe-4S] cluster as a cofactor. Requires Mo-bis(molybdopterin guanine dinucleotide) as cofactor. Post-translationally, predicted to be exported by the Tat system. The position of the signal peptide cleavage has not been experimentally proven.

It is found in the secreted. It catalyses the reaction selenite + a quinone + H2O = selenate + a quinol. In terms of biological role, component of the respiratory selenate reductase complex, which catalyzes the reduction of selenate to selenite. SrdA is probably the catalytic subunit that reduces selenate. This Mesobacillus selenatarsenatis (strain DSM 18680 / JCM 14380 / FERM P-15431 / SF-1) protein is Selenate reductase subunit A.